The chain runs to 216 residues: MSITAAQVNELRKATGAGLMDCKKALTETGGDHEKAIDYLRKKGLAAASKKAGRVASEGAVGSYIHAGGKIGVLVEVNCETDFVARNENFQAFVKDIAMHIAAAAPQYVRREEVTADVVEREKEIYRAKARETGKPENIIEKIIEGQVNKFYADICLLEQQYVKDSDKTVQQFLNETIASIGENISIRRFVRYALGEGLAKKETDFAAEVAAAAGL.

Residues 81–84 (TDFV) form an involved in Mg(2+) ion dislocation from EF-Tu region.

The protein belongs to the EF-Ts family.

It is found in the cytoplasm. In terms of biological role, associates with the EF-Tu.GDP complex and induces the exchange of GDP to GTP. It remains bound to the aminoacyl-tRNA.EF-Tu.GTP complex up to the GTP hydrolysis stage on the ribosome. The sequence is that of Elongation factor Ts from Geobacter metallireducens (strain ATCC 53774 / DSM 7210 / GS-15).